The chain runs to 277 residues: ATP-dependent Clp protease proteolytic subunit, mitochondrial (277 aa).

The transit peptide at 1 to 56 directs the protein to the mitochondrion; sequence MWPGILVGGARVASCRYPALGPRLAAHFPAQRPPQRTLQNGLALQRCLHATATRAL. Ser-153 acts as the Nucleophile in catalysis. His-178 is a catalytic residue. Lys-200 bears the N6-succinyllysine mark. Lys-211 is subject to N6-acetyllysine. The disordered stretch occupies residues 246-277; sequence VHPPQDGEDEPTLVQKEPVEAAPAAEPVPAST. Over residues 265 to 277 the composition is skewed to low complexity; sequence EAAPAAEPVPAST.

This sequence belongs to the peptidase S14 family. Fourteen CLPP subunits assemble into 2 heptameric rings which stack back to back to give a disk-like structure with a central cavity. Component of the ClpXP complex formed by the assembly of two CLPP heptameric rings with two CLPX hexameric rings, giving rise to a symmetrical structure with two central CLPP rings flanked by a CLPX ring at either end of the complex. In terms of tissue distribution, detected in liver (at protein level). Predominantly expressed in skeletal muscle. Intermediate levels in heart, liver and pancreas. Low in brain, placenta, lung and kidney.

The protein localises to the mitochondrion matrix. It carries out the reaction Hydrolysis of proteins to small peptides in the presence of ATP and magnesium. alpha-casein is the usual test substrate. In the absence of ATP, only oligopeptides shorter than five residues are hydrolyzed (such as succinyl-Leu-Tyr-|-NHMec, and Leu-Tyr-Leu-|-Tyr-Trp, in which cleavage of the -Tyr-|-Leu- and -Tyr-|-Trp bonds also occurs).. Its function is as follows. Protease component of the ClpXP complex that cleaves peptides and various proteins in an ATP-dependent process. Has low peptidase activity in the absence of CLPX. The ClpXP complex can degrade CSN1S1, CSN2 and CSN3, as well as synthetic peptides (in vitro) and may be responsible for a fairly general and central housekeeping function rather than for the degradation of specific substrates. Cleaves PINK1 in the mitochondrion. The polypeptide is ATP-dependent Clp protease proteolytic subunit, mitochondrial (Homo sapiens (Human)).